The primary structure comprises 494 residues: Acetyl-coenzyme A carboxylase carboxyl transferase subunit beta, chloroplastic (494 aa).

Residues Leu-230–Asn-494 form the CoA carboxyltransferase N-terminal domain. Zn(2+) is bound by residues Cys-234, Cys-237, Cys-253, and Cys-256. The segment at Cys-234–Cys-256 adopts a C4-type zinc-finger fold.

The protein belongs to the AccD/PCCB family. In terms of assembly, acetyl-CoA carboxylase is a heterohexamer composed of biotin carboxyl carrier protein, biotin carboxylase and 2 subunits each of ACCase subunit alpha and ACCase plastid-coded subunit beta (accD). It depends on Zn(2+) as a cofactor.

The protein localises to the plastid. It localises to the chloroplast stroma. It catalyses the reaction N(6)-carboxybiotinyl-L-lysyl-[protein] + acetyl-CoA = N(6)-biotinyl-L-lysyl-[protein] + malonyl-CoA. Its pathway is lipid metabolism; malonyl-CoA biosynthesis; malonyl-CoA from acetyl-CoA: step 1/1. In terms of biological role, component of the acetyl coenzyme A carboxylase (ACC) complex. Biotin carboxylase (BC) catalyzes the carboxylation of biotin on its carrier protein (BCCP) and then the CO(2) group is transferred by the transcarboxylase to acetyl-CoA to form malonyl-CoA. The polypeptide is Acetyl-coenzyme A carboxylase carboxyl transferase subunit beta, chloroplastic (Drimys granadensis).